Consider the following 119-residue polypeptide: Urotensin-2B (119 aa).

An N-terminal signal peptide occupies residues 1–28 (MNKILSSTVCFGLLTLLSVLSFLQSVHG). Positions 29–109 (RPYLTQGNEI…VDGLFSSHPS (81 aa)) are excised as a propeptide. The cysteines at positions 113 and 118 are disulfide-linked.

This sequence belongs to the urotensin-2 family.

The protein resides in the secreted. Its function is as follows. Potent vasoconstrictor. This chain is Urotensin-2B (UTS2B), found in Homo sapiens (Human).